The chain runs to 131 residues: Arsenate reductase (131 aa).

Catalysis depends on nucleophile residues C10, C82, and C89. Disulfide bonds link C10–C82 and C82–C89.

The protein belongs to the low molecular weight phosphotyrosine protein phosphatase family. Thioredoxin-coupled ArsC subfamily.

The protein localises to the cytoplasm. The catalysed reaction is arsenate + [thioredoxin]-dithiol + H(+) = arsenite + [thioredoxin]-disulfide + H2O. In terms of biological role, catalyzes the reduction of arsenate [As(V)] to arsenite [As(III)]. In Staphylococcus aureus (strain bovine RF122 / ET3-1), this protein is Arsenate reductase.